We begin with the raw amino-acid sequence, 219 residues long: Cytidylate kinase (219 aa).

10–18 (GPAAAGKST) is a binding site for ATP.

The protein belongs to the cytidylate kinase family. Type 1 subfamily.

The protein resides in the cytoplasm. The catalysed reaction is CMP + ATP = CDP + ADP. It catalyses the reaction dCMP + ATP = dCDP + ADP. The protein is Cytidylate kinase of Staphylococcus aureus (strain MRSA252).